A 366-amino-acid chain; its full sequence is Flagellar P-ring protein (366 aa).

Residues 1 to 19 (MTLIRLLACLLFLPCLAQA) form the signal peptide.

It belongs to the FlgI family. As to quaternary structure, the basal body constitutes a major portion of the flagellar organelle and consists of four rings (L,P,S, and M) mounted on a central rod.

The protein localises to the periplasm. It is found in the bacterial flagellum basal body. Its function is as follows. Assembles around the rod to form the L-ring and probably protects the motor/basal body from shearing forces during rotation. The sequence is that of Flagellar P-ring protein from Ruegeria pomeroyi (strain ATCC 700808 / DSM 15171 / DSS-3) (Silicibacter pomeroyi).